Here is a 648-residue protein sequence, read N- to C-terminus: Bifunctional protein TilS/HprT (648 aa).

Residue 29 to 34 (SGGPDS) coordinates ATP. Position 627 (D627) interacts with Mg(2+).

It in the N-terminal section; belongs to the tRNA(Ile)-lysidine synthase family. This sequence in the C-terminal section; belongs to the purine/pyrimidine phosphoribosyltransferase family. It depends on Mg(2+) as a cofactor.

Its subcellular location is the cytoplasm. The catalysed reaction is IMP + diphosphate = hypoxanthine + 5-phospho-alpha-D-ribose 1-diphosphate. It carries out the reaction GMP + diphosphate = guanine + 5-phospho-alpha-D-ribose 1-diphosphate. The enzyme catalyses cytidine(34) in tRNA(Ile2) + L-lysine + ATP = lysidine(34) in tRNA(Ile2) + AMP + diphosphate + H(+). Ligates lysine onto the cytidine present at position 34 of the AUA codon-specific tRNA(Ile) that contains the anticodon CAU, in an ATP-dependent manner. Cytidine is converted to lysidine, thus changing the amino acid specificity of the tRNA from methionine to isoleucine. The chain is Bifunctional protein TilS/HprT (tilS/hprT) from Listeria monocytogenes serotype 4b (strain F2365).